Consider the following 770-residue polypeptide: Signal transducer and activator of transcription 3 (770 aa).

At Ala-2 the chain carries N-acetylalanine. Lys-49 and Lys-87 each carry N6-acetyllysine. Positions 150-162 match the Essential for nuclear import motif; that stretch reads DVRKRVQDLEQKM. The SH2 domain occupies 580-670; the sequence is WNEGYIMGFI…DATNILVSPL (91 aa). Lys-601, Lys-615, and Lys-631 each carry allysine; alternate. 3 positions are modified to N6-acetyllysine; alternate: Lys-601, Lys-615, and Lys-631. Tyr-640 carries the phosphotyrosine; by TYK2 modification. Lys-685 carries the post-translational modification Allysine; alternate. At Lys-685 the chain carries N6-acetyllysine; alternate. Tyr-705 carries the post-translational modification Phosphotyrosine; by FER and PTK6. Lys-707 bears the N6-acetyllysine mark. The residue at position 714 (Thr-714) is a Phosphothreonine. Ser-727 is modified (phosphoserine; by DYRK2, NLK, NEK6, IRAK1, RPS6KA5, ZIPK/DAPK3 and PKC/PRKCE).

This sequence belongs to the transcription factor STAT family. Forms a homodimer or a heterodimer with a related family member (at least STAT1). Component of a promoter-binding complex composed of STAT3, NFATC3 and NFATC4; complex formation is enhanced by calcineurin. Interacts with IL31RA, NCOA1, PELP1, SIPAR, SOCS7, STATIP1 and TMF1. Interacts with IL23R in presence of IL23. Interacts (via SH2 domain) with NLK. Interacts with ARL2BP; the interaction is enhanced by LIF and JAK1 expression. Interacts with KPNA4 and KPNA5; KPNA4 may be the primary mediator of nuclear import. Interacts with CAV2; the interaction is increased on insulin-induced tyrosine phosphorylation of CAV2 and leads to STAT3 activation. Interacts with ARL2BP; interaction is enhanced with ARL2. Interacts with NEK6. Binds to CDK9 when activated and nuclear. Interacts with BMX. Interacts with ZIPK/DAPK3. Interacts with PIAS3; the interaction occurs on stimulation by IL6, CNTF or OSM and inhibits the DNA binding activity of STAT3. In prostate cancer cells, interacts with PRKCE and promotes DNA binding activity of STAT3. Interacts with STMN3, antagonizing its microtubule-destabilizing activity. Interacts with the 'Lys-129' acetylated form of BIRC5/survivin. Interacts with FER. Interacts (via SH2 domain) with EIF2AK2/PKR (via the kinase catalytic domain). Interacts with FGFR4. Interacts with INPP5F; the interaction is independent of STAT3 Tyr-705 phosphorylation status. Interacts with OCIAD1 and OCIAD2. Interacts (unphosphorylated or phosphorylated at Ser-727) with PHB1. Interacts and may form heterodimers with NHLH1. Found in a complex with SLC39A6, SLC39A10 and with the 'Ser-727' phosphorylated form of STAT3 throughout mitosis. Interacts (when acetylated) with EP300 (via bromo domain); interaction takes place following STAT3 acetylation by EP300 and promotes enhanceosome assembly. Interacts (when acetylated) with BRD2 (via bromo domain); interaction promotes STAT3 recruitment to chromatin and T-helper Th17 cell differentiation. Interacts with FAM220A/SIPAR; the interaction occurs in both the nucleus and the cytoplasm, is enhanced by IL6 and promotes STAT3 dephosphorylation. Interacts in both unphosphorylated and phosphorylated forms with FAM220A but interacts preferentially in the phosphorylated form in the nucleus. Interacts with PTPN2; the interaction is promoted by FAM220A and leads to STAT3 dephosphorylation which negatively regulates STAT3 transcriptional activator activity. In terms of processing, activated through tyrosine phosphorylation by BMX. Tyrosine phosphorylated in response to IL6, IL11, CNTF, LIF, KITLG/SCF, CSF1, EGF, PDGF, IFN-alpha and OSM. Activated KIT promotes phosphorylation on tyrosine residues and subsequent translocation to the nucleus. Tyrosine phosphorylated in response to constitutively activated FGFR1, FGFR2, FGFR3 and FGFR4. Phosphorylated on serine upon DNA damage, probably by ATM or ATR. Serine phosphorylation is important for the formation of stable DNA-binding STAT3 homodimers and maximal transcriptional activity. ARL2BP may participate in keeping the phosphorylated state of STAT3 within the nucleus. Tyrosine phosphorylated upon stimulation with EGF. Upon LPS challenge, phosphorylated within the nucleus by IRAK1. Phosphorylated on Ser-727 by RPS6KA5. Dephosphorylation on tyrosine residues by PTPN2 negatively regulates IL6/interleukin-6 signaling. Phosphorylation at Tyr-705 by FER, isoform M2 of PKM (PKM2) or PTK6 leads to an increase of its transcriptional activity. Phosphorylation at Tyr-705 is increased in the presence of calcineurin. Phosphorylation at Tyr-640 by TYK2 negatively regulates transcriptional activity. Acetylated on lysine residues by EP300/p300, promoting its activation. Acetylation at Lys-49 and Lys-87 by EP300/p300 promotes its activation. Acetylation at Lys-87 by EP300/p300 promotes its association with BRD2 and recruitment to chromatin. Deacetylated at Lys-49 and Lys-87 by HDAC1. Acetylation at Lys-685 by EP300/p300 promotes its homodimerization and activation. Deacetylated at Lys-685 by HDAC3. Acetylated on lysine residues by CREBBP. Deacetylation by LOXL3 leads to disrupt STAT3 dimerization and inhibit STAT3 transcription activity. Oxidation of lysine residues to allysine on STAT3 preferentially takes place on lysine residues that are acetylated. Post-translationally, some lysine residues are oxidized to allysine by LOXL3, leading to disrupt STAT3 dimerization and inhibit STAT3 transcription activity. Oxidation of lysine residues to allysine on STAT3 preferentially takes place on lysine residues that are acetylated. In terms of tissue distribution, detected in lung, heart, oviduct, ovary, uterus and kidney (at protein level). Expressed in cardiomyocytes (at protein level). Detected in ovary, oviduct, and at lower levels in uterus and lung.

The protein localises to the cytoplasm. It is found in the nucleus. Its function is as follows. Signal transducer and transcription activator that mediates cellular responses to interleukins, KITLG/SCF, LEP and other growth factors. Once activated, recruits coactivators, such as NCOA1 or MED1, to the promoter region of the target gene. May mediate cellular responses to activated FGFR1, FGFR2, FGFR3 and FGFR4. Upon activation of IL6ST/gp130 signaling by interleukin-6 (IL6), binds to the IL6-responsive elements identified in the promoters of various acute-phase protein genes. Activated by IL31 through IL31RA. Acts as a regulator of inflammatory response by regulating differentiation of naive CD4(+) T-cells into T-helper Th17 or regulatory T-cells (Treg): acetylation promotes its transcription activity and cell differentiation while deacetylation and oxidation of lysine residues by LOXL3 inhibits differentiation. Involved in cell cycle regulation by inducing the expression of key genes for the progression from G1 to S phase, such as CCND1. Mediates the effects of LEP on melanocortin production, body energy homeostasis and lactation. May play an apoptotic role by transctivating BIRC5 expression under LEP activation. Cytoplasmic STAT3 represses macroautophagy by inhibiting EIF2AK2/PKR activity. Plays a crucial role in basal beta cell functions, such as regulation of insulin secretion. Following JAK/STAT signaling activation and as part of a complex with NFATC3 and NFATC4, binds to the alpha-beta E4 promoter region of CRYAB and activates transcription in cardiomyocytes. Plays an important role in host defense in methicillin-resistant S.aureus lung infection by regulating the expression of the antimicrobial lectin REG3G. This is Signal transducer and activator of transcription 3 (Stat3) from Rattus norvegicus (Rat).